The chain runs to 517 residues: MRLPTKEEIQRYWVNEGNKLILVILYTLGNIAAFVYTFVHYYNSPAFEVVGYGVCFARGCAQLLKLNCALILVPVLRNLLSFLRGTFLNNYVPFDKNIVFHKLIAWVICFATFGHVMAHFNNFRLYQDITPQEYKRILGIDYPNLTPIKYAFATLAGWTGHVVCIVMVLMYTSAVESIRRPMFEGFWYTHHLFVVFFGLLVVHGLHSILEPTSFWKWVIGPCALYIVERLIRLLRSKKTTMLIQARIHPSRVIEVRMKTERFKYKPGQYLFLNCPTIAQNEWHPFTITSAPEEDFVSCHINVVGNWTGKLSTLLNPDKKMGIVQENVLKSPDGKPILRIDGPFGAASEEVFKYKQVILVGAGIGVTPFASILKHIKYQMARTYNTTPLIDKVHFYWICRDRNSFEWFSGLIGELEMENHNNFLEIHPYLTGALSAQEIRDVMYGDEEKDLITGFTTPTQFGRPKWDEIFADHALRYAEKDVGVFFCGPKLLSKSLYKASTHYTKTTTCRFHYNKENF.

Topologically, residues 1-19 are cytoplasmic; sequence MRLPTKEEIQRYWVNEGNK. A helical membrane pass occupies residues 20-40; the sequence is LILVILYTLGNIAAFVYTFVH. Topologically, residues 41–62 are extracellular; that stretch reads YYNSPAFEVVGYGVCFARGCAQ. In terms of domain architecture, Ferric oxidoreductase spans 58–201; the sequence is RGCAQLLKLN…LFVVFFGLLV (144 aa). The helical transmembrane segment at 63–83 threads the bilayer; that stretch reads LLKLNCALILVPVLRNLLSFL. The Cytoplasmic portion of the chain corresponds to 84 to 97; that stretch reads RGTFLNNYVPFDKN. A helical membrane pass occupies residues 98 to 118; it reads IVFHKLIAWVICFATFGHVMA. Positions 101 and 115 each coordinate heme. Topologically, residues 119–149 are extracellular; that stretch reads HFNNFRLYQDITPQEYKRILGIDYPNLTPIK. A helical transmembrane segment spans residues 150–170; it reads YAFATLAGWTGHVVCIVMVLM. At 171–184 the chain is on the cytoplasmic side; it reads YTSAVESIRRPMFE. A helical transmembrane segment spans residues 185–205; it reads GFWYTHHLFVVFFGLLVVHGL. Heme contacts are provided by His-190 and His-203. Position 206 (His-206) is a topological domain, extracellular. Residues 207-227 form a helical membrane-spanning segment; sequence SILEPTSFWKWVIGPCALYIV. The Cytoplasmic portion of the chain corresponds to 228 to 517; it reads ERLIRLLRSK…CRFHYNKENF (290 aa). The FAD-binding FR-type domain occupies 229 to 349; that stretch reads RLIRLLRSKK…DGPFGAASEE (121 aa). Position 283–289 (283–289) interacts with FAD; it reads HPFTITS.

Composed of a heavy chain and a light chain. The cofactor is FAD.

Its subcellular location is the membrane. In terms of biological role, critical component of the membrane-bound oxidase that generates superoxide. It is the terminal component of a respiratory chain that transfers single electrons from cytoplasmic NADPH across the plasma membrane to molecular oxygen on the exterior. This Dictyostelium discoideum (Social amoeba) protein is Superoxide-generating NADPH oxidase heavy chain subunit A (noxA).